Reading from the N-terminus, the 463-residue chain is Cysteine--tRNA ligase (463 aa).

Cys33 contacts Zn(2+). Positions 35–45 (PTVYDFAHIGN) match the 'HIGH' region motif. Zn(2+) is bound by residues Cys221, His246, and Glu250. The 'KMSKS' region motif lies at 279–283 (KMSKS). Position 282 (Lys282) interacts with ATP.

Belongs to the class-I aminoacyl-tRNA synthetase family. In terms of assembly, monomer. Requires Zn(2+) as cofactor.

It is found in the cytoplasm. It carries out the reaction tRNA(Cys) + L-cysteine + ATP = L-cysteinyl-tRNA(Cys) + AMP + diphosphate. The polypeptide is Cysteine--tRNA ligase (Rhizobium leguminosarum bv. trifolii (strain WSM2304)).